The chain runs to 264 residues: Short chain dehydrogenase CPUR_05429 (264 aa).

4 residues coordinate NADP(+): Ile24, Asp70, Asn97, and Arg130. Residues Ser146 and Ser147 each act as proton donor in the active site. 3 residues coordinate NADP(+): Tyr161, Lys165, and Thr196. Residue Tyr161 is the Proton acceptor of the active site. Lys165 (lowers pKa of active site Tyr) is an active-site residue.

Belongs to the short-chain dehydrogenases/reductases (SDR) family.

Its pathway is pigment biosynthesis. Short chain dehydrogenase; part of the ergochrome gene cluster responsible for the typical purple-black color of the ergot sclerotia. The ergochrome gene cluster produces several ergot pigments including the yellow ergochrome secalonic acid and its derivatives, as well as the red anthraquinones endocrocin and clavorubin. The pathway begins with the synthesis of atrochrysone thioester by the polyketide synthase (PKS) CPUR_05437. The atrochrysone carboxyl ACP thioesterase CPUR_05436 then breaks the thioester bond and releases the atrochrysone carboxylic acid from CPUR_05437. The atrochrysone carboxylic acid is then converted to atrochrysone which is further transformed into emodin anthrone. The next step is performed by the anthrone oxygenase CPUR_05434 that catalyzes the oxidation of emodinanthrone to emodin. Emodin is further modified to yield monodictyphenone via several steps involving CPUR_05427, CPUR_05428, CPUR_05429 and CPUR_05430. The short chain dehydrogenase/reductase CPUR_05418 then catalyzes the C-5 ketoreduction to give the xanthone skeleton of the monomeric units. Ergochromes formation requires further dimerization steps of different xanthone units, probably catalyzed by the cytochrome P450 monooxygenase CPUR_05419. CPUR_05425, CPUR_05426 and CPUR_05431 are unique to Claviceps, thus it is likely that they are involved in further modification of xanthone units or in their dimerization. The yellow ergochromes and the red anthraquinone pigments endocrocin and clavorubin are products from the same PKS derived precursors and the latter are likely shunt products in the pathway of xanthone biosynthesis. It is proposed that atrochrysone carboxylic acid released from the PKS CPUR_05437 can also be converted to endocrocin anthrone which is further oxidized into endocrocin by CPUR_05435. Endocrocin could be then modified to clavorubin, possibly by CPUR_05423 and CPUR_05431. Clavorubin is the principal anthraquinone metabolite produced by the cluster with a much higher yield compared to endocrocin. The polypeptide is Short chain dehydrogenase CPUR_05429 (Claviceps purpurea (strain 20.1) (Ergot fungus)).